A 126-amino-acid polypeptide reads, in one-letter code: Large-conductance mechanosensitive channel (126 aa).

3 helical membrane passes run 14–34 (VIDL…VTSL), 40–60 (MPLL…FTFV), and 67–87 (GLFI…FLFI).

Belongs to the MscL family. In terms of assembly, homopentamer.

The protein resides in the cell membrane. Functionally, channel that opens in response to stretch forces in the membrane lipid bilayer. May participate in the regulation of osmotic pressure changes within the cell. This Bacillus licheniformis (strain ATCC 14580 / DSM 13 / JCM 2505 / CCUG 7422 / NBRC 12200 / NCIMB 9375 / NCTC 10341 / NRRL NRS-1264 / Gibson 46) protein is Large-conductance mechanosensitive channel.